The sequence spans 348 residues: Histone PARylation factor 1 (348 aa).

The span at 1 to 10 shows a compositional bias: basic residues; sequence MAGRGKRKPR. The tract at residues 1–38 is disordered; sequence MAGRGKRKPRSLPQTETPNGEVKKAKEGLKDDKTSVGE. The segment covering 21–38 has biased composition (basic and acidic residues); it reads EVKKAKEGLKDDKTSVGE. A coiled-coil region spans residues 170-200; it reads LQKKKKEKRQQKDDAALNRLEEDLKREAERL. The Proton donor role is filled by E285.

Belongs to the HPF1 family. In terms of assembly, interacts with PARP1 (via the PARP catalytic domain). Interacts with PARP2 (via the PARP catalytic domain). Interacts with core nucleosomes in a parp1- and parp2-dependent manner. In adult, mainly expressed in gonads.

The protein localises to the chromosome. The protein resides in the nucleus. Functionally, cofactor for serine ADP-ribosylation that confers serine specificity on parp1 and parp2 and plays a key role in DNA damage response. Initiates the repair of double-strand DNA breaks: recruited to DNA damage sites by parp1 and parp2 and switches the amino acid specificity of parp1 and parp2 from aspartate or glutamate to serine residues, licensing serine ADP-ribosylation of target proteins. Serine ADP-ribosylation of target proteins, such as histones, promotes decompaction of chromatin and the recruitment of repair factors leading to the reparation of DNA strand breaks. Serine ADP-ribosylation of proteins constitutes the primary form of ADP-ribosylation of proteins in response to DNA damage. Hpf1 acts by completing the active site of parp1 and parp2: forms a composite active site composed of residues from Hpf1 and parp1 or parp2. While hpf1 promotes the initiation of serine ADP-ribosylation, it restricts the polymerase activity of parp1 and parp2 in order to limit the length of poly-ADP-ribose chains. Hpf1 also promotes tyrosine ADP-ribosylation, probably by conferring tyrosine specificity on parp1. The polypeptide is Histone PARylation factor 1 (Danio rerio (Zebrafish)).